The primary structure comprises 504 residues: Glycerol kinase (504 aa).

ADP is bound at residue Thr12. 3 residues coordinate ATP: Thr12, Thr13, and Ser14. Position 12 (Thr12) interacts with sn-glycerol 3-phosphate. ADP is bound at residue Arg16. Positions 82, 83, 134, and 249 each coordinate sn-glycerol 3-phosphate. The glycerol site is built by Arg82, Glu83, Tyr134, Asp249, and Gln250. Positions 271 and 315 each coordinate ADP. Positions 271, 315, 319, and 416 each coordinate ATP. Positions 416 and 420 each coordinate ADP.

The protein belongs to the FGGY kinase family.

It carries out the reaction glycerol + ATP = sn-glycerol 3-phosphate + ADP + H(+). Its pathway is polyol metabolism; glycerol degradation via glycerol kinase pathway; sn-glycerol 3-phosphate from glycerol: step 1/1. Inhibited by fructose 1,6-bisphosphate (FBP). Key enzyme in the regulation of glycerol uptake and metabolism. Catalyzes the phosphorylation of glycerol to yield sn-glycerol 3-phosphate. In Mycobacteroides abscessus (strain ATCC 19977 / DSM 44196 / CCUG 20993 / CIP 104536 / JCM 13569 / NCTC 13031 / TMC 1543 / L948) (Mycobacterium abscessus), this protein is Glycerol kinase.